We begin with the raw amino-acid sequence, 266 residues long: MVCLKLPGGSYMAKLTVTLMVLSSPLALAGDTRPRFLQQDKYECHFFNGTERVRFLHRDIYNQEEDLRFDSDVGEYRAVTELGRPDAEYWNSQKDFLEDRRAAVDTYCRHNYGVGESFTVQRRVEPKVTVYPARTQTLQHHNLLVCSVNGFYPGSIEVRWFRNSQEEKAGVVSTGLIQNGDWTFQTLVMLETVPRSGEVYTCQVEHPSVTSPLTVEWRAQSESAQSKMLSGVGGFVLGLLFLGAGLFIYFKNQKGHSGLHPTGLVS.

An N-terminal signal peptide occupies residues 1–29 (MVCLKLPGGSYMAKLTVTLMVLSSPLALA). A beta-1 region spans residues 30–124 (GDTRPRFLQQ…GESFTVQRRV (95 aa)). Topologically, residues 30-227 (GDTRPRFLQQ…RAQSESAQSK (198 aa)) are extracellular. 2 cysteine pairs are disulfide-bonded: C44–C108 and C146–C202. N48 carries an N-linked (GlcNAc...) asparagine glycan. Positions 125 to 227 (EPKVTVYPAR…RAQSESAQSK (103 aa)) are beta-2. One can recognise an Ig-like C1-type domain in the interval 126–214 (PKVTVYPART…EHPSVTSPLT (89 aa)). The helical transmembrane segment at 228 to 248 (MLSGVGGFVLGLLFLGAGLFI) threads the bilayer. At 249-266 (YFKNQKGHSGLHPTGLVS) the chain is on the cytoplasmic side.

This sequence belongs to the MHC class II family. Heterodimer of an alpha and a beta subunit; also referred as MHC class II molecule. In the endoplasmic reticulum (ER) it forms a heterononamer; 3 MHC class II molecules bind to a CD74 homotrimer (also known as invariant chain or HLA class II histocompatibility antigen gamma chain). In the endosomal/lysosomal system; CD74 undergoes sequential degradation by various proteases; leaving a small fragment termed CLIP on each MHC class II molecule. MHC class II molecule interacts with HLA_DM, and HLA_DO in B-cells, in order to release CLIP and facilitate the binding of antigenic peptides. Post-translationally, ubiquitinated by MARCH1 and MARCH8 at Lys-254 leading to down-regulation of MHC class II.

Its subcellular location is the cell membrane. The protein resides in the endoplasmic reticulum membrane. The protein localises to the golgi apparatus. It localises to the trans-Golgi network membrane. It is found in the endosome membrane. Its subcellular location is the lysosome membrane. The protein resides in the late endosome membrane. Its function is as follows. Binds peptides derived from antigens that access the endocytic route of antigen presenting cells (APC) and presents them on the cell surface for recognition by the CD4 T-cells. The peptide binding cleft accommodates peptides of 10-30 residues. The peptides presented by MHC class II molecules are generated mostly by degradation of proteins that access the endocytic route, where they are processed by lysosomal proteases and other hydrolases. Exogenous antigens that have been endocytosed by the APC are thus readily available for presentation via MHC II molecules, and for this reason this antigen presentation pathway is usually referred to as exogenous. As membrane proteins on their way to degradation in lysosomes as part of their normal turn-over are also contained in the endosomal/lysosomal compartments, exogenous antigens must compete with those derived from endogenous components. Autophagy is also a source of endogenous peptides, autophagosomes constitutively fuse with MHC class II loading compartments. In addition to APCs, other cells of the gastrointestinal tract, such as epithelial cells, express MHC class II molecules and CD74 and act as APCs, which is an unusual trait of the GI tract. To produce a MHC class II molecule that presents an antigen, three MHC class II molecules (heterodimers of an alpha and a beta chain) associate with a CD74 trimer in the ER to form a heterononamer. Soon after the entry of this complex into the endosomal/lysosomal system where antigen processing occurs, CD74 undergoes a sequential degradation by various proteases, including CTSS and CTSL, leaving a small fragment termed CLIP (class-II-associated invariant chain peptide). The removal of CLIP is facilitated by HLA-DM via direct binding to the alpha-beta-CLIP complex so that CLIP is released. HLA-DM stabilizes MHC class II molecules until primary high affinity antigenic peptides are bound. The MHC II molecule bound to a peptide is then transported to the cell membrane surface. In B-cells, the interaction between HLA-DM and MHC class II molecules is regulated by HLA-DO. Primary dendritic cells (DCs) also to express HLA-DO. Lysosomal microenvironment has been implicated in the regulation of antigen loading into MHC II molecules, increased acidification produces increased proteolysis and efficient peptide loading. The polypeptide is HLA class II histocompatibility antigen, DR beta 5 chain (Homo sapiens (Human)).